We begin with the raw amino-acid sequence, 410 residues long: Cytochrome P450 (410 aa).

Cys-359 contacts heme.

This sequence belongs to the cytochrome P450 family. It depends on heme as a cofactor.

In Bacillus subtilis (strain 168), this protein is Cytochrome P450 (cypA).